Here is a 395-residue protein sequence, read N- to C-terminus: Chaperone protein DnaJ (395 aa).

The 66-residue stretch at 5–70 (DFYEVLGVDK…NKRAAYDRMG (66 aa)) folds into the J domain. Residues 145–223 (GKDETIKVPT…CDGVGRVRKT (79 aa)) form a CR-type zinc finger. The Zn(2+) site is built by Cys-158, Cys-161, Cys-175, Cys-178, Cys-197, Cys-200, Cys-211, and Cys-214. 4 CXXCXGXG motif repeats span residues 158–165 (CERCDGQG), 175–182 (CGTCQGAG), 197–204 (CPQCGGRG), and 211–218 (CNDCDGVG).

Belongs to the DnaJ family. Homodimer. The cofactor is Zn(2+).

The protein localises to the cytoplasm. Participates actively in the response to hyperosmotic and heat shock by preventing the aggregation of stress-denatured proteins and by disaggregating proteins, also in an autonomous, DnaK-independent fashion. Unfolded proteins bind initially to DnaJ; upon interaction with the DnaJ-bound protein, DnaK hydrolyzes its bound ATP, resulting in the formation of a stable complex. GrpE releases ADP from DnaK; ATP binding to DnaK triggers the release of the substrate protein, thus completing the reaction cycle. Several rounds of ATP-dependent interactions between DnaJ, DnaK and GrpE are required for fully efficient folding. Also involved, together with DnaK and GrpE, in the DNA replication of plasmids through activation of initiation proteins. The chain is Chaperone protein DnaJ from Maricaulis maris (strain MCS10) (Caulobacter maris).